A 155-amino-acid chain; its full sequence is Putative pre-16S rRNA nuclease (155 aa).

Belongs to the YqgF nuclease family.

It is found in the cytoplasm. Could be a nuclease involved in processing of the 5'-end of pre-16S rRNA. The polypeptide is Putative pre-16S rRNA nuclease (Xanthomonas campestris pv. campestris (strain 8004)).